We begin with the raw amino-acid sequence, 504 residues long: Cytochrome P450 6B2 (504 aa).

Position 445 (cysteine 445) interacts with heme.

It belongs to the cytochrome P450 family. It depends on heme as a cofactor.

The protein localises to the endoplasmic reticulum membrane. The protein resides in the microsome membrane. The catalysed reaction is an organic molecule + reduced [NADPH--hemoprotein reductase] + O2 = an alcohol + oxidized [NADPH--hemoprotein reductase] + H2O + H(+). The polypeptide is Cytochrome P450 6B2 (CYP6B2) (Helicoverpa armigera (Cotton bollworm)).